We begin with the raw amino-acid sequence, 226 residues long: uncharacterized protein (226 aa).

This is an uncharacterized protein from Mycobacterium bovis (strain ATCC BAA-935 / AF2122/97).